The following is a 329-amino-acid chain: tRNA uridine(34) hydroxylase (329 aa).

The Rhodanese domain maps to 123-217 (SDPDVILVDT…YLEEVPEEES (95 aa)). Cys-177 functions as the Cysteine persulfide intermediate in the catalytic mechanism. Residues 285–329 (REKQVQLSNARGETHVGGDAAHLIDQRKKEKLAHKEQQRSGKKAK) form a disordered region. A compositionally biased stretch (basic and acidic residues) spans 296 to 323 (GETHVGGDAAHLIDQRKKEKLAHKEQQR).

The protein belongs to the TrhO family.

It catalyses the reaction uridine(34) in tRNA + AH2 + O2 = 5-hydroxyuridine(34) in tRNA + A + H2O. Catalyzes oxygen-dependent 5-hydroxyuridine (ho5U) modification at position 34 in tRNAs. The polypeptide is tRNA uridine(34) hydroxylase (Vibrio atlanticus (strain LGP32) (Vibrio splendidus (strain Mel32))).